The sequence spans 100 residues: Urease subunit gamma (100 aa).

The protein belongs to the urease gamma subunit family. Heterotrimer of UreA (gamma), UreB (beta) and UreC (alpha) subunits. Three heterotrimers associate to form the active enzyme.

It localises to the cytoplasm. The enzyme catalyses urea + 2 H2O + H(+) = hydrogencarbonate + 2 NH4(+). It participates in nitrogen metabolism; urea degradation; CO(2) and NH(3) from urea (urease route): step 1/1. The sequence is that of Urease subunit gamma from Prochlorococcus marinus subsp. pastoris (strain CCMP1986 / NIES-2087 / MED4).